Here is a 1176-residue protein sequence, read N- to C-terminus: Leucine--tRNA ligase, cytoplasmic (1176 aa).

Tyr52 and Tyr54 together coordinate L-leucine. The 'HIGH' region motif lies at 60–63; sequence HLGH. Position 167 is a phosphoserine (Ser167). The editing domain stretch occupies residues 260–509; it reads GPQEYTLLKL…DAGDALIYME (250 aa). Residues Leu594 and Ser597 each coordinate L-leucine. A 'KMSKS' region motif is present at residues 716-720; sequence KMSKS. An ATP-binding site is contributed by Lys719. Ser720 carries the post-translational modification Phosphoserine. N6-acetyllysine occurs at positions 970 and 1047.

It belongs to the class-I aminoacyl-tRNA synthetase family. As to quaternary structure, part of the aminoacyl-tRNA synthetase multienzyme complex, also known as multisynthetase complex (MSC), that is composed of the aminoacyl-tRNA ligases for Arg (RARS1), Asp (DARS1), Gln (QARS1), Ile (IARS1), Leu (LARS1), Lys (KARS1), Met (MARS1) the bifunctional ligase for Glu and Pro (EPRS1) and the auxiliary subunits AIMP1/p43, AIMP2/p38 and EEF1E1/p18.

Its subcellular location is the cytoplasm. It carries out the reaction tRNA(Leu) + L-leucine + ATP = L-leucyl-tRNA(Leu) + AMP + diphosphate. The enzyme catalyses L-methionyl-tRNA(Leu) + H2O = tRNA(Leu) + L-methionine + H(+). 5-fluoro-1,3-dihydro-1-hydroxy-1,2-benzoxaborole inhibits LARS1 by forming a covalent adduct with the 3' adenosine of tRNA(Leu) at the editing site, thus locking the enzyme in an inactive conformation. Aminoacyl-tRNA synthetase that catalyzes the specific attachment of leucine to its cognate tRNA (tRNA(Leu)). It performs tRNA aminoacylation in a two-step reaction: Leu is initially activated by ATP to form a leucyl-adenylate (Leu-AMP) intermediate; then the leucyl moiety is transferred to the acceptor 3' end of the tRNA to yield leucyl-tRNA. To improve the fidelity of catalytic reactions, it is also able to hydrolyze misactivated aminoacyl-adenylate intermediates (pre-transfer editing) and mischarged aminoacyl-tRNAs (post-transfer editing). The chain is Leucine--tRNA ligase, cytoplasmic from Homo sapiens (Human).